The chain runs to 546 residues: MERLRGPSPLENTTARHPAPLGPAHRDGLEPGTADRVWDVCVIGSGASGAVAADRLVRQGLDVLMVEEGFRLAPHVGLDEAESLSRQALARDGEGNWTDEGWPWTTSNLGGGTVYYGGASFRYRPFDFDPGELVHTDGVDVRWPYTLADLVPYYEVLERRLGVCGGDAPGIHRGSRHSRGPAHQPSPAARVLRAAGESLGYRPFPTPLAINRDPHGGRAACARDSLCVSHLCPTGAKGDVVAVFLAPLAAHPNFALRTGVRALRLEQDRSGEVAAVRCLDRQTGQAHRVRARVYVVACNAIQSAALLLRSRTPYSPDGVGNHSHLVGRGLCMKLSEYLSGTVDADPAVLADPYTNTGPFSTVAFLDHYLDPDCPGGFGGLIYESKRDQRHKLVHDALELRIETILADHPNLDNRVGLSTHLDEDGMPAVVIDYTPDPRDLDRLRYMTGRCERLLRTAGARGIRSRSTGFAQGSSHLHGTCRAGHDPARSVVDAWGRVHSADNVYIVDGSFMPYPGGLNPTLTIQAHALRTSRAIASHLAADRAAHV.

Residues Met-1–Glu-30 are disordered. The active-site Proton acceptor is His-475.

Belongs to the GMC oxidoreductase family. FAD is required as a cofactor.

It participates in antibiotic biosynthesis; lividomycin biosynthesis. In terms of biological role, glucosaminyl-6'-oxidase involved in the biosynthetic pathway of lividomycin by mediating FAD-dependent dehydrogenation of 6'''-hydroxyparomomycin to paromomycin. The chain is 6'''-hydroxyparomomycin C oxidase (livQ) from Streptomyces lividus.